The sequence spans 147 residues: Microtubule-associated protein 1 light chain 3 gamma (147 aa).

Ser-93 and Ser-96 each carry phosphoserine; by TBK1. A lipid anchor (Phosphatidylethanolamine amidated glycine; alternate) is attached at Gly-126. Gly-126 carries Phosphatidylserine amidated glycine; alternate lipidation. The propeptide at 127 to 147 is removed in mature form; the sequence is CLESAAPRDGSSLEDRPCNPL.

The protein belongs to the ATG8 family. As to quaternary structure, 3 different light chains, LC1 (a cleavage product of MAP1B), LC2 (a cleavage product of MAP1A) and LC3 (produced by one of the MAP1LC3 genes), can associate with the MAP1A or MAP1B heavy chains. Interacts with TP53INP1 and TP53INP2. Interacts with CALCOCO2. Interacts with TECPR2. Interacts with TBC1D5. Found in a complex with UBQLN1 and UBQLN2. Interacts with UBQLN4 (via STI1 1 and 2 domains). Interacts with UBQLN1 in the presence of UBQLN4. Interacts with TRIM5. Interacts with ATG13. Interacts with MEFV and TRIM21. Interacts with WDR81; recruits MAP1LC3C to ubiquitinated protein aggregates in the aggrephagy process. Interacts with MOAP1 (via LIR motif). Interacts with reticulophagy regulators RETREG1, RETREG2 and RETREG3. Interacts with TAX1BP1. Interacts with IRGM. Interacts with SPART. The precursor molecule is cleaved by ATG4 (ATG4A, ATG4B, ATG4C or ATG4D) to expose the glycine at the C-terminus and form the cytosolic form, LC3-I. The processed form is then activated by APG7L/ATG7, transferred to ATG3 and conjugated to phosphatidylethanolamine (PE) phospholipid to form the membrane-bound form, LC3-II. During non-canonical autophagy, the processed form is conjugated to phosphatidylserine (PS) phospholipid. ATG4 proteins also mediate the delipidation of PE-conjugated forms. In addition, ATG4B and ATG4D mediate delipidation of ATG8 proteins conjugated to PS during non-canonical autophagy. In terms of processing, (Microbial infection) The Legionella effector RavZ is a deconjugating enzyme that hydrolyzes the amide bond between the C-terminal glycine residue and an adjacent aromatic residue in ATG8 proteins conjugated to phosphatidylethanolamine (PE), producing an ATG8 protein that is resistant to reconjugation by the host machinery due to the cleavage of the reactive C-terminal glycine. RavZ is also able to mediate delipidation of ATG8 proteins conjugated to phosphatidylserine (PS). Post-translationally, phosphorylation at Ser-96 and Ser-98 by TBK1 prevents interaction with ATG4 (ATG4A, ATG4B, ATG4C or ATG4D). Phosphorylation by TBK1 on autophagosomes prevents their delipidation by ATG4 and premature removal from nascent autophagosomes. Most abundant in placenta, lung and ovary.

It localises to the cytoplasmic vesicle. The protein resides in the autophagosome membrane. Its subcellular location is the endomembrane system. The protein localises to the cytoplasm. It is found in the cytoskeleton. Ubiquitin-like modifier that plays a crucial role in antibacterial autophagy (xenophagy) through the selective binding of CALCOCO2. Recruits all ATG8 family members to infecting bacteria such as S.typhimurium. May also play a role in aggrephagy, the macroautophagic degradation of ubiquitinated and aggregated proteins. The chain is Microtubule-associated protein 1 light chain 3 gamma (MAP1LC3C) from Homo sapiens (Human).